Reading from the N-terminus, the 101-residue chain is Threonine-rich inner membrane protein GfcA (101 aa).

The N-terminal stretch at 1–21 (MKHKLSAILMAFMLTTPAAFA) is a signal peptide. Over 22–59 (APEATNGTEATTGTTGTTTTTTGATTTATTTGGVAAGA) the chain is Cytoplasmic. A disordered region spans residues 24–45 (EATNGTEATTGTTGTTTTTTGA). Residues 60 to 80 (VGTATVVGVATAVGVATLAVV) traverse the membrane as a helical segment. At 81–101 (AANDSGDGGSHNTSTTTSTTR) the chain is on the periplasmic side. The interval 82 to 101 (ANDSGDGGSHNTSTTTSTTR) is disordered.

It localises to the cell inner membrane. This Escherichia coli (strain K12) protein is Threonine-rich inner membrane protein GfcA (gfcA).